Here is a 481-residue protein sequence, read N- to C-terminus: NADH-quinone oxidoreductase subunit N (481 aa).

The next 14 helical transmembrane spans lie at 11–31, 38–58, 74–94, 103–123, 128–148, 163–183, 208–228, 241–261, 272–292, 300–322, 332–352, 368–388, 404–424, and 450–470; these read ALPE…DLWA, WTHY…LAVW, GMSR…FVYA, IFKG…SVMV, FLTA…LIAL, FVLG…VYGA, LGLV…PFHM, VTAL…FRIL, WSLM…LAAI, MLAY…GAVG, TYAL…DGDN, VWLA…PPLM, GYVW…FYYL, and SLLS…QTVI.

It belongs to the complex I subunit 2 family. In terms of assembly, NDH-1 is composed of 14 different subunits. Subunits NuoA, H, J, K, L, M, N constitute the membrane sector of the complex.

Its subcellular location is the cell inner membrane. It carries out the reaction a quinone + NADH + 5 H(+)(in) = a quinol + NAD(+) + 4 H(+)(out). In terms of biological role, NDH-1 shuttles electrons from NADH, via FMN and iron-sulfur (Fe-S) centers, to quinones in the respiratory chain. The immediate electron acceptor for the enzyme in this species is believed to be ubiquinone. Couples the redox reaction to proton translocation (for every two electrons transferred, four hydrogen ions are translocated across the cytoplasmic membrane), and thus conserves the redox energy in a proton gradient. The chain is NADH-quinone oxidoreductase subunit N from Neisseria gonorrhoeae (strain ATCC 700825 / FA 1090).